The primary structure comprises 417 residues: MSGSNTAISRRRLLQGAGAMWLLSVSQVSLAAVSQVVAVRVWPASSYTRVTVESNRQLKYKQFALSNPERVVVDIEDVNLNSVLKGMAAQIRADDPFIKSARVGQFDPQTVRMVFELKQNVKPQLFALAPVAGFKERLVMDLYPANAQDMQDPLLALLEDYNKGDLEKQVPPAQSGPQPGKAGRDRPIVIMLDPGHGGEDSGAVGKYKTREKDVVLQIARRLRSLIEKEGNMKVYMTRNEDIFIPLQVRVAKAQKQRADLFVSIHADAFTSRQPSGSSVFALSTKGATSTAAKYLAQTQNASDLIGGVSKSGDRYVDHTMFDMVQSLTIADSLKFGKAVLNKLGKINKLHKNQVEQAGFAVLKAPDIPSILVETAFISNVEEERKLKTATFQQEVAESILAGIKAYFADGATLARRG.

The segment at residues 1-31 (MSGSNTAISRRRLLQGAGAMWLLSVSQVSLA) is a signal peptide (tat-type signal). A disordered region spans residues 166–185 (LEKQVPPAQSGPQPGKAGRD). The MurNAc-LAA domain maps to 190–404 (IMLDPGHGGE…VAESILAGIK (215 aa)).

The protein belongs to the N-acetylmuramoyl-L-alanine amidase 3 family. Predicted to be exported by the Tat system. The position of the signal peptide cleavage has not been experimentally proven.

The protein resides in the periplasm. The enzyme catalyses Hydrolyzes the link between N-acetylmuramoyl residues and L-amino acid residues in certain cell-wall glycopeptides.. Cell-wall hydrolase involved in septum cleavage during cell division. This Escherichia coli O6:H1 (strain CFT073 / ATCC 700928 / UPEC) protein is N-acetylmuramoyl-L-alanine amidase AmiC (amiC).